Reading from the N-terminus, the 450-residue chain is Aspartyl/glutamyl-tRNA(Asn/Gln) amidotransferase subunit B (450 aa).

The protein belongs to the GatB/GatE family. GatB subfamily. As to quaternary structure, heterotrimer of A, B and C subunits.

The catalysed reaction is L-glutamyl-tRNA(Gln) + L-glutamine + ATP + H2O = L-glutaminyl-tRNA(Gln) + L-glutamate + ADP + phosphate + H(+). It catalyses the reaction L-aspartyl-tRNA(Asn) + L-glutamine + ATP + H2O = L-asparaginyl-tRNA(Asn) + L-glutamate + ADP + phosphate + 2 H(+). In terms of biological role, allows the formation of correctly charged Asn-tRNA(Asn) or Gln-tRNA(Gln) through the transamidation of misacylated Asp-tRNA(Asn) or Glu-tRNA(Gln) in organisms which lack either or both of asparaginyl-tRNA or glutaminyl-tRNA synthetases. The reaction takes place in the presence of glutamine and ATP through an activated phospho-Asp-tRNA(Asn) or phospho-Glu-tRNA(Gln). This chain is Aspartyl/glutamyl-tRNA(Asn/Gln) amidotransferase subunit B, found in Methanobrevibacter smithii (strain ATCC 35061 / DSM 861 / OCM 144 / PS).